The chain runs to 247 residues: Reticulon-like protein B8 (247 aa).

The Reticulon domain occupies 61-247 (SADVLLWRNK…SGKFGLKKRE (187 aa)). 3 helical membrane passes run 71-91 (KISA…EWIN), 92-112 (FHFL…QFVW), and 166-186 (FLMA…CNFL).

It is found in the endoplasmic reticulum membrane. In Arabidopsis thaliana (Mouse-ear cress), this protein is Reticulon-like protein B8 (RTNLB8).